A 212-amino-acid polypeptide reads, in one-letter code: MSSTRWLHRQLNDPYVSLAKKQGYRSRATFKLIEMDSKFSIFKKGQYVLDLGSSPGGWSQFAAQRVSHNNNNPVFAVDIQNMDAIPNVIFIQCDIINDIELLSDKFHNKKFDVILSDMAPKACGNKQVDHANIINLCEISLDIVVRFTRENGVFITKILQGEYEKEFYQSMKTYFQSVKYFKPKASRKDSSEMYLVGLGFKKDSQDIKTIES.

Residues G56, W58, D78, D94, and D117 each coordinate S-adenosyl-L-methionine. K157 (proton acceptor) is an active-site residue.

The protein belongs to the class I-like SAM-binding methyltransferase superfamily. RNA methyltransferase RlmE family.

It localises to the cytoplasm. It catalyses the reaction uridine(2552) in 23S rRNA + S-adenosyl-L-methionine = 2'-O-methyluridine(2552) in 23S rRNA + S-adenosyl-L-homocysteine + H(+). Specifically methylates the uridine in position 2552 of 23S rRNA at the 2'-O position of the ribose in the fully assembled 50S ribosomal subunit. The sequence is that of Ribosomal RNA large subunit methyltransferase E from Ehrlichia chaffeensis (strain ATCC CRL-10679 / Arkansas).